The chain runs to 98 residues: NADH-ubiquinone oxidoreductase chain 4L (98 aa).

3 consecutive transmembrane segments (helical) span residues 1–21 (MSIVYMNVMLAFMIALIGTLL), 29–49 (SLMCLEGMMLAMYIFISLISL), and 59–79 (VPLIILVFAACEAALGLALLV).

The protein belongs to the complex I subunit 4L family. Core subunit of respiratory chain NADH dehydrogenase (Complex I) which is composed of 45 different subunits.

The protein localises to the mitochondrion inner membrane. It catalyses the reaction a ubiquinone + NADH + 5 H(+)(in) = a ubiquinol + NAD(+) + 4 H(+)(out). In terms of biological role, core subunit of the mitochondrial membrane respiratory chain NADH dehydrogenase (Complex I) which catalyzes electron transfer from NADH through the respiratory chain, using ubiquinone as an electron acceptor. Part of the enzyme membrane arm which is embedded in the lipid bilayer and involved in proton translocation. The polypeptide is NADH-ubiquinone oxidoreductase chain 4L (MT-ND4L) (Hemiechinus auritus (Long-eared hedgehog)).